We begin with the raw amino-acid sequence, 541 residues long: Membrane protein insertase YidC (541 aa).

5 helical membrane passes run 7 to 27 (LLFM…QVDY), 345 to 365 (LVQN…AVLY), 415 to 435 (LGGC…YWTF), 453 to 473 (LSAQ…MFLL), and 492 to 512 (FMPL…VLYW).

The protein belongs to the OXA1/ALB3/YidC family. Type 1 subfamily. As to quaternary structure, interacts with the Sec translocase complex via SecD. Specifically interacts with transmembrane segments of nascent integral membrane proteins during membrane integration.

Its subcellular location is the cell inner membrane. Functionally, required for the insertion and/or proper folding and/or complex formation of integral membrane proteins into the membrane. Involved in integration of membrane proteins that insert both dependently and independently of the Sec translocase complex, as well as at least some lipoproteins. Aids folding of multispanning membrane proteins. This Histophilus somni (strain 2336) (Haemophilus somnus) protein is Membrane protein insertase YidC.